A 1921-amino-acid polypeptide reads, in one-letter code: Disks large homolog 5 (1921 aa).

The CARD domain occupies 1 to 90; sequence MEPQRRELLA…HLLPILYLNG (90 aa). A disordered region spans residues 116-143; sequence ESSSSLSSVGTTGKAPSPPPLLTEQQAN. Residues 139 to 601 adopt a coiled-coil conformation; the sequence is EQQANDTVEN…KEARFRQLMA (463 aa). Phosphoserine is present on residues Ser-264 and Ser-295. PDZ domains follow at residues 620 to 710 and 705 to 796; these read VVEF…RRRK and VVRR…LKVF. The disordered stretch occupies residues 857–898; the sequence is ELGHSGGSSSFLHKPFSGSSSPVSPQACPSTSERSLNSFRSD. Polar residues predominate over residues 873-898; sequence SGSSSPVSPQACPSTSERSLNSFRSD. Ser-900 bears the Phosphoserine mark. Positions 930–1121 are disordered; that stretch reads EVPLDKIDPE…RPKSAPSFRP (192 aa). At Thr-984 the chain carries Phosphothreonine. Position 1000 is a phosphoserine (Ser-1000). A Phosphothreonine modification is found at Thr-1011. The segment covering 1017–1030 has biased composition (basic and acidic residues); sequence RRSDSIKFQHRLET. Ser-1021 bears the Phosphoserine mark. Positions 1045–1055 are enriched in pro residues; that stretch reads TSPPSAPPPSM. A Phosphothreonine modification is found at Thr-1183. Disordered regions lie at residues 1204–1227, 1243–1266, and 1280–1343; these read VLPCGSPPVPRDAGSQSLSPSVQH, YSEMRASQGSNSLPSSARLGSSSN, and PRYP…KDRP. Ser-1209 carries the post-translational modification Phosphoserine. Polar residues predominate over residues 1217 to 1227; it reads GSQSLSPSVQH. The span at 1252–1266 shows a compositional bias: low complexity; it reads SNSLPSSARLGSSSN. Ser-1263 is subject to Phosphoserine. A compositionally biased stretch (polar residues) spans 1292-1324; that stretch reads GSLSHSECSTPPRSPLNIDTLSSCSQPQTTAST. Ser-1334 is modified (phosphoserine). Residues 1350-1429 enclose the PDZ 3 domain; that stretch reads HVKVQKGSEP…TITILAQYNP (80 aa). Composition is skewed to polar residues over residues 1434–1443, 1450–1460, and 1483–1495; these read LNSHSRSSSH, PHSTLQGSSAG, and AKQSASSTRSVGD. The disordered stretch occupies residues 1434 to 1501; that stretch reads LNSHSRSSSH…SVGDTTKKTP (68 aa). The PDZ 4 domain occupies 1504–1585; sequence RIVFIKKSQL…SLRLKVQYRH (82 aa). An SH3 domain is found at 1596–1664; sequence GDSFYIRALY…PSKYVMDQEF (69 aa). At Ser-1669 the chain carries Phosphoserine. Positions 1724-1907 constitute a Guanylate kinase-like domain; the sequence is DSVSLAYQRV…ICTQILAMVS (184 aa).

This sequence belongs to the MAGUK family. As to quaternary structure, interacts with MPP1. Interacts with CTNNB1 and with the third SH3 domain of SORBS3 to form a ternary complex. Interacts (via coiled-coil domain) with MARK3. Interacts (via PDZ domain 3) with STK3/MST2 and STK4/MST1. Interacts with SCRIB. Interacts with CTNB1. Interacts with SMO and (via PDZ4 or guanylate kinase-like domain) with KIF7. Brain (at protein level).

Its subcellular location is the cell junction. It localises to the cell membrane. It is found in the postsynaptic density. The protein resides in the cytoplasm. The protein localises to the cytoskeleton. Its subcellular location is the cilium basal body. Functionally, acts as a regulator of the Hippo signaling pathway. Negatively regulates the Hippo signaling pathway by mediating the interaction of MARK3 with STK3/4, bringing them together to promote MARK3-dependent hyperphosphorylation and inactivation of STK3 kinase activity toward LATS1. Positively regulates the Hippo signaling by mediating the interaction of SCRIB with STK4/MST1 and LATS1 which is important for the activation of the Hippo signaling pathway. Involved in regulating cell proliferation, maintenance of epithelial polarity, epithelial-mesenchymal transition (EMT), cell migration and invasion. Plays an important role in dendritic spine formation and synaptogenesis in cortical neurons; regulates synaptogenesis by enhancing the cell surface localization of N-cadherin. Acts as a positive regulator of hedgehog (Hh) signaling pathway. Plays a critical role in the early point of the SMO activity cycle by interacting with SMO at the ciliary base to induce the accumulation of KIF7 and GLI2 at the ciliary tip for GLI2 activation. This is Disks large homolog 5 (Dlg5) from Mus musculus (Mouse).